The following is a 430-amino-acid chain: Serine--tRNA ligase (430 aa).

Residue 237-239 participates in L-serine binding; it reads TAE. Residue 268 to 270 participates in ATP binding; the sequence is RRE. Glu-291 is a binding site for L-serine. Residue 355–358 coordinates ATP; it reads EISS. Ser-391 lines the L-serine pocket.

This sequence belongs to the class-II aminoacyl-tRNA synthetase family. Type-1 seryl-tRNA synthetase subfamily. As to quaternary structure, homodimer. The tRNA molecule binds across the dimer.

It is found in the cytoplasm. It catalyses the reaction tRNA(Ser) + L-serine + ATP = L-seryl-tRNA(Ser) + AMP + diphosphate + H(+). The enzyme catalyses tRNA(Sec) + L-serine + ATP = L-seryl-tRNA(Sec) + AMP + diphosphate + H(+). Its pathway is aminoacyl-tRNA biosynthesis; selenocysteinyl-tRNA(Sec) biosynthesis; L-seryl-tRNA(Sec) from L-serine and tRNA(Sec): step 1/1. Functionally, catalyzes the attachment of serine to tRNA(Ser). Is also able to aminoacylate tRNA(Sec) with serine, to form the misacylated tRNA L-seryl-tRNA(Sec), which will be further converted into selenocysteinyl-tRNA(Sec). In Magnetococcus marinus (strain ATCC BAA-1437 / JCM 17883 / MC-1), this protein is Serine--tRNA ligase.